Reading from the N-terminus, the 531-residue chain is Cytochrome P450 monooxygenase peniB (531 aa).

A helical membrane pass occupies residues 30 to 48 (ILSIAAVVFLGYLLLRPLF). Cys445 contributes to the heme binding site.

This sequence belongs to the cytochrome P450 family. The cofactor is heme.

Its subcellular location is the membrane. It catalyses the reaction silphinene-15-oate + 2 reduced [NADPH--hemoprotein reductase] + 2 O2 = gamma-lactone-2-keto[5.5.5.5]fenestrane + 2 oxidized [NADPH--hemoprotein reductase] + 3 H2O + H(+). It participates in secondary metabolite biosynthesis; terpenoid biosynthesis. Functionally, cytochrome P450 monooxygenase; part of the gene cluster that mediates the biosynthesis of penifulvin A, a potent insecticidal sesquiterpene that features a [5.5.5.6]dioxafenestrane ring. Within the pathway, peniB catalyzes the multi-step oxidation of silphinene to synthesize gamma-lactone-2-keto[5.5.5.5]fenestrane, including oxidation of the C15 methylgroup in silphinene to form silphinene-15-oic acid, activationof the C1-C2 double bond to form the gamma-lactone-2-hydroxy[5.5.5.5]fenestrane, and dehydrogenation of the hydroxy group at C2 of gamma-lactone-2-hydroxy[5.5.5.5]fenestrane to generate gamma-lactone-2-keto[5.5.5.5]fenestrane. The first step of the pathway is performed by the sesquiterpene cyclase peniA that generates the angular triquinane scaffold silphinene via cyclization of the linear farnesyl pyrophosphate (FPP). The cytochrome P450 monooxygenase peniB and the flavin-dependent monooxygenase peniC then catalyze a series of oxidation reactions to transform silphinene into penifulvin A. This is Cytochrome P450 monooxygenase peniB from Penicillium patulum (Penicillium griseofulvum).